The primary structure comprises 459 residues: LAS seventeen-binding protein 3 (459 aa).

Positions 219 to 403 (RPSNGGRGSF…APTSPSTSSP (185 aa)) are disordered. Position 227 is a phosphoserine (Ser227). Positions 229–242 (DDDEDDYYDDDDYY) are enriched in acidic residues. The span at 243–262 (NDIPSSFSSTDASSTRPNTR) shows a compositional bias: low complexity. Residues 289–300 (YSRNSRLAPTNS) are compositionally biased toward polar residues. Thr298 is modified (phosphothreonine). 2 positions are modified to phosphoserine: Ser300 and Ser303. A compositionally biased stretch (acidic residues) spans 340-350 (DEYDDYDDDYE). Over residues 351 to 371 (SGYRRGNGRDRTKDREVDDLS) the composition is skewed to basic and acidic residues. A compositionally biased stretch (polar residues) spans 372–391 (NRFSKSRISSASTPQTSQGR). Position 393 is a phosphothreonine (Thr393). The span at 393–403 (TAPTSPSTSSP) shows a compositional bias: low complexity. Phosphoserine is present on residues Ser397, Ser402, and Ser416. One can recognise an SH3 domain in the interval 400–459 (TSSPKAVALYSFAGEESGDLPFRKGDVITILKKSDSQNDWWTGRVNGREGIFPANYVELV).

The protein belongs to the SH3YL1 family. In terms of assembly, interacts with LAS17. In terms of processing, phosphorylation of Ser-397 is induced 2-fold in response to mating pheromone.

The protein resides in the cytoplasm. In Saccharomyces cerevisiae (strain YJM789) (Baker's yeast), this protein is LAS seventeen-binding protein 3 (LSB3).